The primary structure comprises 160 residues: Small ribosomal subunit protein uS9 (160 aa).

Positions 1–18 are enriched in polar residues; it reads MTDTSNSLQDLGTLTGAP. Residues 1-37 form a disordered region; it reads MTDTSNSLQDLGTLTGAPSAQPVKSVEPKIDAQGRAY.

The protein belongs to the universal ribosomal protein uS9 family.

This Hyphomonas neptunium (strain ATCC 15444) protein is Small ribosomal subunit protein uS9.